The following is a 529-amino-acid chain: Bifunctional purine biosynthesis protein PurH (529 aa).

An MGS-like domain is found at 1 to 148 (MQQRRPVRRA…KNHKDVAIVV (148 aa)).

This sequence belongs to the PurH family.

It carries out the reaction (6R)-10-formyltetrahydrofolate + 5-amino-1-(5-phospho-beta-D-ribosyl)imidazole-4-carboxamide = 5-formamido-1-(5-phospho-D-ribosyl)imidazole-4-carboxamide + (6S)-5,6,7,8-tetrahydrofolate. The enzyme catalyses IMP + H2O = 5-formamido-1-(5-phospho-D-ribosyl)imidazole-4-carboxamide. Its pathway is purine metabolism; IMP biosynthesis via de novo pathway; 5-formamido-1-(5-phospho-D-ribosyl)imidazole-4-carboxamide from 5-amino-1-(5-phospho-D-ribosyl)imidazole-4-carboxamide (10-formyl THF route): step 1/1. It participates in purine metabolism; IMP biosynthesis via de novo pathway; IMP from 5-formamido-1-(5-phospho-D-ribosyl)imidazole-4-carboxamide: step 1/1. The chain is Bifunctional purine biosynthesis protein PurH from Klebsiella pneumoniae (strain 342).